Consider the following 394-residue polypeptide: NAD(P)H-quinone oxidoreductase subunit H (394 aa).

Belongs to the complex I 49 kDa subunit family. NDH-1 can be composed of about 15 different subunits; different subcomplexes with different compositions have been identified which probably have different functions.

It is found in the cellular thylakoid membrane. The catalysed reaction is a plastoquinone + NADH + (n+1) H(+)(in) = a plastoquinol + NAD(+) + n H(+)(out). The enzyme catalyses a plastoquinone + NADPH + (n+1) H(+)(in) = a plastoquinol + NADP(+) + n H(+)(out). Functionally, NDH-1 shuttles electrons from an unknown electron donor, via FMN and iron-sulfur (Fe-S) centers, to quinones in the respiratory and/or the photosynthetic chain. The immediate electron acceptor for the enzyme in this species is believed to be plastoquinone. Couples the redox reaction to proton translocation, and thus conserves the redox energy in a proton gradient. Cyanobacterial NDH-1 also plays a role in inorganic carbon-concentration. The protein is NAD(P)H-quinone oxidoreductase subunit H of Prochlorococcus marinus (strain MIT 9313).